A 697-amino-acid chain; its full sequence is SPX domain-containing membrane protein At1g63010 (697 aa).

The region spanning 2 to 145 (VAFGKYLQRK…GYRFADYYVK (144 aa)) is the SPX domain. Transmembrane regions (helical) follow at residues 247–267 (FNSLLLNLGNTFLYMVNTYII), 278–298 (LGAAATVCGVVIGSMAVAQVF), 315–335 (LVFSSIALFIGNLMYALAYDA), 337–356 (SIALLLLGRVCCGLGSARAV), 375–395 (AGFVSASALGMACGPALAGLL), and 411–431 (LPGWVMAVAWLFYLVWLCISF). The segment at 439–459 (EDGEKNNRNETTSDRVESSRV) is disordered. Transmembrane regions (helical) follow at residues 513–533 (LLIYFMLKYSMEILLSESSVI), 544–564 (SVAIFLACLGLTVLPINILVG), 576–596 (ILLTSEIIVFLGILFSFNLFV), 604–624 (VISGLIMFVAAEVLEGVNLSL), and 670–690 (LLNATLLPSLVICIGSIVATC).

Belongs to the major facilitator superfamily.

The protein resides in the membrane. The protein is SPX domain-containing membrane protein At1g63010 of Arabidopsis thaliana (Mouse-ear cress).